Here is a 261-residue protein sequence, read N- to C-terminus: Cytochrome c oxidase subunit 3 (261 aa).

Residues 1-15 (MTHQSHAYHMVKPSP) lie on the Mitochondrial matrix side of the membrane. Residues 16 to 34 (WPLTGALSALLMTSGLAMW) traverse the membrane as a helical segment. Residues 35 to 40 (FHFHSM) lie on the Mitochondrial intermembrane side of the membrane. Residues 41 to 66 (TLLMLGLLTNTLTMYQWWRDVTREST) traverse the membrane as a helical segment. At 67–72 (YQGHHT) the chain is on the mitochondrial matrix side. Residues 73–105 (PPVQKGLRYGMILFITSEVFFFAGFFWAFYHSS) traverse the membrane as a helical segment. Residues 106–128 (LAPTPQLGGHWPPTGITPLNPLE) are Mitochondrial intermembrane-facing. A helical transmembrane segment spans residues 129 to 152 (VPLLNTSVLLASGVSITWAHHSLM). Residues 153 to 155 (ENN) are Mitochondrial matrix-facing. A helical transmembrane segment spans residues 156 to 183 (RNQMIQALLITILLGLYFTLLQASEYFE). Residues 184-190 (SPFTISD) are Mitochondrial intermembrane-facing. Residues 191–223 (GIYGSTFFVATGFHGLHVIIGSTFLTICFIRQL) traverse the membrane as a helical segment. Topologically, residues 224 to 232 (MFHFTSKHH) are mitochondrial matrix. A helical transmembrane segment spans residues 233-256 (FGFEAAAWYWHFVDVVWLFLYVSI). Topologically, residues 257–261 (YWWGS) are mitochondrial intermembrane.

It belongs to the cytochrome c oxidase subunit 3 family. Component of the cytochrome c oxidase (complex IV, CIV), a multisubunit enzyme composed of 14 subunits. The complex is composed of a catalytic core of 3 subunits MT-CO1, MT-CO2 and MT-CO3, encoded in the mitochondrial DNA, and 11 supernumerary subunits COX4I1 (or COX4I2), COX5A, COX5B, COX6A1 (or COX6A2), COX6B1 (or COX6B2), COX6C, COX7A2 (or COX7A1), COX7B, COX7C, COX8A and NDUFA4, which are encoded in the nuclear genome. The complex exists as a monomer or a dimer and forms supercomplexes (SCs) in the inner mitochondrial membrane with NADH-ubiquinone oxidoreductase (complex I, CI) and ubiquinol-cytochrome c oxidoreductase (cytochrome b-c1 complex, complex III, CIII), resulting in different assemblies (supercomplex SCI(1)III(2)IV(1) and megacomplex MCI(2)III(2)IV(2)).

It localises to the mitochondrion inner membrane. It catalyses the reaction 4 Fe(II)-[cytochrome c] + O2 + 8 H(+)(in) = 4 Fe(III)-[cytochrome c] + 2 H2O + 4 H(+)(out). Functionally, component of the cytochrome c oxidase, the last enzyme in the mitochondrial electron transport chain which drives oxidative phosphorylation. The respiratory chain contains 3 multisubunit complexes succinate dehydrogenase (complex II, CII), ubiquinol-cytochrome c oxidoreductase (cytochrome b-c1 complex, complex III, CIII) and cytochrome c oxidase (complex IV, CIV), that cooperate to transfer electrons derived from NADH and succinate to molecular oxygen, creating an electrochemical gradient over the inner membrane that drives transmembrane transport and the ATP synthase. Cytochrome c oxidase is the component of the respiratory chain that catalyzes the reduction of oxygen to water. Electrons originating from reduced cytochrome c in the intermembrane space (IMS) are transferred via the dinuclear copper A center (CU(A)) of subunit 2 and heme A of subunit 1 to the active site in subunit 1, a binuclear center (BNC) formed by heme A3 and copper B (CU(B)). The BNC reduces molecular oxygen to 2 water molecules using 4 electrons from cytochrome c in the IMS and 4 protons from the mitochondrial matrix. This Homo sapiens (Human) protein is Cytochrome c oxidase subunit 3 (MT-CO3).